The sequence spans 256 residues: Major prion protein 2 (256 aa).

The first 24 residues, 1-24 (MVKSHIGSWILVLFVAMWSDVALC), serve as a signal peptide directing secretion. The interaction with GRB2, ERI3 and SYN1 stretch occupies residues 25–233 (KKRPKPGGGW…ESEAYYQRGA (209 aa)). The tract at residues 28–110 (PKPGGGWNTG…QWNKPSKPKT (83 aa)) is disordered. 5 consecutive repeat copies span residues 54–62 (PQEGGDWGQ), 63–70 (PHGGGWGQ), 71–78 (PHVGGWGQ), 79–86 (PHGGGWGQ), and 87–95 (PHGGGGWGQ). The 5 X 8 AA tandem repeats of P-H-G-G-G-W-G-Q stretch occupies residues 54–95 (PQEGGDWGQPHGGGWGQPHVGGWGQPHGGGWGQPHGGGGWGQ). The segment covering 58–99 (GDWGQPHGGGWGQPHVGGWGQPHGGGWGQPHGGGGWGQGGTH) has biased composition (gly residues). Positions 64, 65, 66, 72, 74, 80, 81, 82, 88, 90, and 91 each coordinate Cu(2+). Cys182 and Cys217 are joined by a disulfide. 2 N-linked (GlcNAc...) asparagine glycosylation sites follow: Asn184 and Asn200. Ala233 carries the GPI-anchor amidated alanine lipid modification. A propeptide spans 234–256 (SVILFSSPPVILLISFLIFLIVG) (removed in mature form).

This sequence belongs to the prion family. As to quaternary structure, monomer and homodimer. Has a tendency to aggregate into amyloid fibrils containing a cross-beta spine, formed by a steric zipper of superposed beta-strands. Soluble oligomers may represent an intermediate stage on the path to fibril formation. Copper binding may promote oligomerization. Interacts with GRB2, APP, ERI3/PRNPIP and SYN1. Mislocalized cytosolically exposed PrP interacts with MGRN1; this interaction alters MGRN1 subcellular location and causes lysosomal enlargement. Interacts with KIAA1191.

The protein localises to the cell membrane. Its subcellular location is the golgi apparatus. In terms of biological role, its primary physiological function is unclear. Has cytoprotective activity against internal or environmental stresses. May play a role in neuronal development and synaptic plasticity. May be required for neuronal myelin sheath maintenance. May play a role in iron uptake and iron homeostasis. Soluble oligomers are toxic to cultured neuroblastoma cells and induce apoptosis (in vitro). Association with GPC1 (via its heparan sulfate chains) targets PRNP to lipid rafts. Also provides Cu(2+) or Zn(2+) for the ascorbate-mediated GPC1 deaminase degradation of its heparan sulfate side chains. In Tragelaphus strepsiceros (Greater kudu), this protein is Major prion protein 2.